The following is a 320-amino-acid chain: Cytosolic Fe-S cluster assembly factor NUBP1 (320 aa).

Met1 bears the N-acetylmethionine mark. Residues Cys8, Cys22, Cys25, and Cys31 each coordinate [4Fe-4S] cluster. 62-69 (GKGGVGKS) lines the ATP pocket. Positions 235 and 238 each coordinate [4Fe-4S] cluster. Ser319 carries the phosphoserine modification.

The protein belongs to the Mrp/NBP35 ATP-binding proteins family. NUBP1/NBP35 subfamily. Heterotetramer of 2 NUBP1 and 2 NUBP2 chains. Interacts with KIFC1. Interacts with the BBS/CCT complex subunit CCT1. The cofactor is [4Fe-4S] cluster.

The protein localises to the cytoplasm. The protein resides in the nucleus. It localises to the cell projection. It is found in the cytoskeleton. Its subcellular location is the cilium axoneme. The protein localises to the cilium basal body. The protein resides in the microtubule organizing center. It localises to the centrosome. It is found in the centriole. In terms of biological role, component of the cytosolic iron-sulfur (Fe/S) protein assembly (CIA) machinery. Required for maturation of extramitochondrial Fe-S proteins. The NUBP1-NUBP2 heterotetramer forms a Fe-S scaffold complex, mediating the de novo assembly of an Fe-S cluster and its transfer to target apoproteins. Implicated in the regulation of centrosome duplication. Negatively regulates cilium formation and structure. This is Cytosolic Fe-S cluster assembly factor NUBP1 from Rattus norvegicus (Rat).